An 892-amino-acid chain; its full sequence is Alanine--tRNA ligase (892 aa).

Histidine 574, histidine 578, cysteine 676, and histidine 680 together coordinate Zn(2+).

This sequence belongs to the class-II aminoacyl-tRNA synthetase family. Requires Zn(2+) as cofactor.

It localises to the cytoplasm. The enzyme catalyses tRNA(Ala) + L-alanine + ATP = L-alanyl-tRNA(Ala) + AMP + diphosphate. Catalyzes the attachment of alanine to tRNA(Ala) in a two-step reaction: alanine is first activated by ATP to form Ala-AMP and then transferred to the acceptor end of tRNA(Ala). Also edits incorrectly charged Ser-tRNA(Ala) and Gly-tRNA(Ala) via its editing domain. The protein is Alanine--tRNA ligase of Prochlorococcus marinus (strain SARG / CCMP1375 / SS120).